Consider the following 623-residue polypeptide: Mu-like prophage FluMu defective tail fiber protein (623 aa).

It to phage Mu protein S.

This is Mu-like prophage FluMu defective tail fiber protein from Haemophilus influenzae (strain ATCC 51907 / DSM 11121 / KW20 / Rd).